A 675-amino-acid chain; its full sequence is Probable metal-nicotianamine transporter YSL16 (675 aa).

A compositionally biased stretch (gly residues) spans 1 to 11 (MDRHALGGGGA). Residues 1–20 (MDRHALGGGGALEIEKTPEA) are disordered. Transmembrane regions (helical) follow at residues 50-70 (GMVA…KLSL), 73-93 (GLIP…LRGW), 118-138 (CAVA…LLGL), 162-182 (GIGW…LTLL), 231-251 (ISFL…CGFL), 283-303 (LVNL…WPLI), 329-349 (FICI…VIVV), 393-413 (MAYT…PVMF), 421-441 (VIIA…GTGL), 453-473 (IALF…AGLV), 507-527 (VGQV…FFLF), 567-587 (LQLC…RDFL), 605-625 (FLVG…VFLW), and 633-653 (AALL…IWTF).

The protein belongs to the YSL (TC 2.A.67.2) family. Expressed in roots.

Its subcellular location is the membrane. Functionally, may be involved in the transport of nicotianamine-chelated metals. This chain is Probable metal-nicotianamine transporter YSL16 (YSL16), found in Oryza sativa subsp. japonica (Rice).